Consider the following 181-residue polypeptide: Oligoribonuclease (181 aa).

The Exonuclease domain occupies 8–171 (LIWVDLEMTG…VDIQESIAEL (164 aa)). Residue Y129 is part of the active site.

Belongs to the oligoribonuclease family.

The protein localises to the cytoplasm. Its function is as follows. 3'-to-5' exoribonuclease specific for small oligoribonucleotides. In Shewanella loihica (strain ATCC BAA-1088 / PV-4), this protein is Oligoribonuclease.